Here is a 244-residue protein sequence, read N- to C-terminus: Methylthioribulose-1-phosphate dehydratase (244 aa).

Substrate is bound at residue C89. Residues H107 and H109 each coordinate Zn(2+). Residue E130 is the Proton donor/acceptor of the active site. Residue H192 participates in Zn(2+) binding.

This sequence belongs to the aldolase class II family. MtnB subfamily. Zn(2+) is required as a cofactor.

The protein localises to the cytoplasm. It catalyses the reaction 5-(methylsulfanyl)-D-ribulose 1-phosphate = 5-methylsulfanyl-2,3-dioxopentyl phosphate + H2O. It functions in the pathway amino-acid biosynthesis; L-methionine biosynthesis via salvage pathway; L-methionine from S-methyl-5-thio-alpha-D-ribose 1-phosphate: step 2/6. Functionally, catalyzes the dehydration of methylthioribulose-1-phosphate (MTRu-1-P) into 2,3-diketo-5-methylthiopentyl-1-phosphate (DK-MTP-1-P). The polypeptide is Methylthioribulose-1-phosphate dehydratase (Saccharomyces cerevisiae (strain YJM789) (Baker's yeast)).